The chain runs to 165 residues: Large ribosomal subunit protein uL10 (165 aa).

This sequence belongs to the universal ribosomal protein uL10 family. As to quaternary structure, part of the ribosomal stalk of the 50S ribosomal subunit. The N-terminus interacts with L11 and the large rRNA to form the base of the stalk. The C-terminus forms an elongated spine to which L12 dimers bind in a sequential fashion forming a multimeric L10(L12)X complex.

Its function is as follows. Forms part of the ribosomal stalk, playing a central role in the interaction of the ribosome with GTP-bound translation factors. This chain is Large ribosomal subunit protein uL10, found in Citrobacter koseri (strain ATCC BAA-895 / CDC 4225-83 / SGSC4696).